The following is a 284-amino-acid chain: MIASAPGKIILFGEHAVVYGRHAVVSAINLRCRVSVRKSDRFLIRSSLGESGLDYQRHPYVVQAVKRFGELRNIPGAEIEIESEIPIGSGLGSSAAVIVATIAALNAEFDGDMDKEAIFQMAKQVEIDVQGRASGIDPFISTFGGSWLFPERRKVEMPFKFFVINFGSRSTAEMVAKVAELRERHPEVVDKIFDAIDAISLEASDVGSAERLEELIAINQSLLRAIGVSNPEIDRTIAELERMGLNAKITGAGGGGCIFGLFKGEKPKGSFIVEPEKEGVRIEE.

86 to 96 (PIGSGLGSSAA) contacts ATP. D137 functions as the Proton acceptor in the catalytic mechanism.

The protein belongs to the GHMP kinase family. Mevalonate kinase subfamily. In terms of assembly, homodimer. The cofactor is Mg(2+).

It is found in the cytoplasm. It catalyses the reaction (R)-mevalonate + ATP = (R)-5-phosphomevalonate + ADP + H(+). It functions in the pathway isoprenoid biosynthesis; isopentenyl diphosphate biosynthesis via mevalonate pathway; isopentenyl diphosphate from (R)-mevalonate: step 1/3. In terms of biological role, catalyzes the phosphorylation of (R)-mevalonate (MVA) to (R)-mevalonate 5-phosphate (MVAP). Functions in the mevalonate (MVA) pathway leading to isopentenyl diphosphate (IPP), a key precursor for the biosynthesis of isoprenoid compounds such as archaeal membrane lipids. The protein is Mevalonate kinase of Archaeoglobus fulgidus (strain ATCC 49558 / DSM 4304 / JCM 9628 / NBRC 100126 / VC-16).